Here is a 447-residue protein sequence, read N- to C-terminus: Rab GDP dissociation inhibitor alpha (447 aa).

This sequence belongs to the Rab GDI family. Interacts with RHOH. Interacts with the non-phosphorylated forms of RAB1A, RAB3A, RAB5A, RAB5B, RAB5C, RAB8A, RAB8B, RAB10, RAB12, RAB35, and RAB43.

Its subcellular location is the cytoplasm. The protein localises to the golgi apparatus. It localises to the trans-Golgi network. Functionally, regulates the GDP/GTP exchange reaction of most Rab proteins by inhibiting the dissociation of GDP from them, and the subsequent binding of GTP to them. Promotes the dissociation of GDP-bound Rab proteins from the membrane and inhibits their activation. Promotes the dissociation of RAB1A, RAB3A, RAB5A and RAB10 from membranes. This is Rab GDP dissociation inhibitor alpha (GDI1) from Pongo pygmaeus (Bornean orangutan).